The primary structure comprises 937 residues: MRALPTTATTLLGVLFFPSASRSQYVRDLGTEQWTLSSATLNRTVPAQFPSQVHMDLLREGIIDEPYNDLNDFNLRWIADANWTYTSGKIEGLGEDYESTWLVFDGLDTFASISFCGQFVGATDNQFRQYMFDVSSILKACPEEPTLGIQFGSAPNIVDAIAQDPSSPTWPEGVQITYEYPNRWFMRKEQSDFGWDWGPAFAPAGPWKPGYVVQLKQAAPVYVRNTDLDIYRLGQINYLPPDQTQPWVVNASLDYLGSLPENPSMAIEVKDLQSGEILASRPLTNITVTEGSVTGVTVLEGVDPKLWWPQGLGDQNLYNVTISVTDGGNQSVAEVTKRTGFRTIFLNQRNITDAQLAQGIAPGANWHFEVNGHEFYAKGSNLIPPDCFWTRVTEDTMTRLFDAVVAGNQNMLRVWSSGAYLHDYIYDLADEKGILLCSEFQFSDALYPTDDAFLENVAAEVVYNVRRVNHHPSLALWAGGNEIESLMLLLVEAADPESYPFYVGEYEKMYISLFLPLVYENTRSISYSPSSTTEGYLDIDLSAPVPMAERYSNTTEGEYYGDTDHYNYDASIAFDYGTYPVGRFANEFGFHSMPSLQTWQQALTDPADLTFNSSVVMLRNHHYPAGGLMTDNYHNTVARHGRNDPGRAGLLPDAQHSVRPRGQLQRLVPRDPALPGGPLQVTNPVLPAGQRAARTPARVPVLAARGHLAGALVGGDRVRRPLEGPHYVARDIYKPVIVSPFWNYTTGALDIYVTSDLWTAAAGSVTLTWRDLSGKPIASNGGLPTKPLPFHVGALNSTRLYRMNMKQQPLPRHEDAILALELTATGSLPNTDEEVTFTHEQWFTPAFPKDLDLVNLRVRVEYDAPLGKFAVEATAGVALYTWLEHPEGVVGYFEENSFVVVPGQKKVVGFVVQADETDGEWVHDVTVRSLWDLNEGE.

Positions 1–23 are cleaved as a signal peptide; sequence MRALPTTATTLLGVLFFPSASRS. 7 N-linked (GlcNAc...) asparagine glycosylation sites follow: N42, N82, N250, N285, N319, N329, and N350. The active-site Proton donor is E482. N553, N612, N743, and N796 each carry an N-linked (GlcNAc...) asparagine glycan.

It belongs to the glycosyl hydrolase 2 family. Beta-mannosidase A subfamily. In terms of assembly, homodimer. In terms of processing, N-glycosylated.

It is found in the secreted. It carries out the reaction Hydrolysis of terminal, non-reducing beta-D-mannose residues in beta-D-mannosides.. It participates in glycan metabolism; N-glycan degradation. Its function is as follows. Exoglycosidase that cleaves the single beta-linked mannose residue from the non-reducing end of beta-mannosidic oligosaccharides of various complexity and length. Involved in the degradation of polymeric mannan and galactomannan. Releases the terminal mannose residue from mannotriose and is somewaht less active on other mannooligosaccharides. The sequence is that of Beta-mannosidase A (mndA) from Aspergillus aculeatus.